Here is a 536-residue protein sequence, read N- to C-terminus: MISRQSSVRGVSRGFSSGSAVAGGVKRVAFSSASMSGGAGRCSSGGFGSRSLYNLGGHKSISMSVAGSCQGGGYGGAGGFGVGGYGAGFGAGGFGGGFGGSFNGRGGPGFPVCPAGGIQEVTINQSLLTPLQVEIDPEIQKIRTAEREQIKTLNNKFASFIDKVRFLEQQNKVLETKWNLLQQQTTTTSPRNLDPFFETYINALRKNLDTLSNDKGRLQSELKLMQDSVEDFKTKYEEEINKRTAAENDFVVLKKDVDAAYMIKVELEAKMESLKDEINFMRVLYEAELSQMQTHVSDTSVVLSMDNNRNLDLDGIIAEVRAQYEEIARKSKAEVESWYQIKVQQLQMSADQHGDSLKSTKNEISELNRMIQRIRSEIENIKKQTLQASVADAEQRGELALKDAYTKRADLETALQKAKEDLARLMRDYQELMNVKLALDVEIATYRKLLEGEECRMSGECKSAVSISVVGGSASIGGSGGIGLGLGSGFGSGSCSGSGFGFGGGIYGSSGTKITSSATITKRSPRTRQDPDGLQP.

Residues 1–145 are head; the sequence is MISRQSSVRG…DPEIQKIRTA (145 aa). Arginine 13 is subject to Omega-N-methylarginine. Residues 146–181 are coil 1A; it reads EREQIKTLNNKFASFIDKVRFLEQQNKVLETKWNLL. An IF rod domain is found at 146 to 457; it reads EREQIKTLNN…KLLEGEECRM (312 aa). The tract at residues 182 to 200 is linker 1; sequence QQQTTTTSPRNLDPFFETY. Residues 201 to 293 are coil 1B; the sequence is INALRKNLDT…LYEAELSQMQ (93 aa). The interval 294 to 316 is linker 12; that stretch reads THVSDTSVVLSMDNNRNLDLDGI. Residues 317–454 are coil 2; it reads IAEVRAQYEE…TYRKLLEGEE (138 aa). A tail region spans residues 455-524; it reads CRMSGECKSA…TSSATITKRS (70 aa). A disordered region spans residues 515 to 536; the sequence is TSSATITKRSPRTRQDPDGLQP. Over residues 527–536 the composition is skewed to basic and acidic residues; that stretch reads TRQDPDGLQP.

Belongs to the intermediate filament family. In terms of assembly, heterotetramer of two type I and two type II keratins. keratin-4 is generally associated with keratin-13.

The sequence is that of Keratin, type II cytoskeletal 4 from Rattus norvegicus (Rat).